The following is a 108-amino-acid chain: Large ribosomal subunit protein uL24 (108 aa).

Belongs to the universal ribosomal protein uL24 family. As to quaternary structure, part of the 50S ribosomal subunit.

In terms of biological role, one of two assembly initiator proteins, it binds directly to the 5'-end of the 23S rRNA, where it nucleates assembly of the 50S subunit. Functionally, one of the proteins that surrounds the polypeptide exit tunnel on the outside of the subunit. The protein is Large ribosomal subunit protein uL24 of Moorella thermoacetica (strain ATCC 39073 / JCM 9320).